The chain runs to 203 residues: Cardiotrophin-1 (203 aa).

Belongs to the IL-6 superfamily. As to expression, highly expressed in heart, skeletal muscle, liver, lung and kidney. Lower levels in testis and brain. No expression in spleen.

Its subcellular location is the secreted. Functionally, induces cardiac myocyte hypertrophy in vitro. Binds to and activates the ILST/gp130 receptor. The protein is Cardiotrophin-1 (Ctf1) of Mus musculus (Mouse).